We begin with the raw amino-acid sequence, 91 residues long: Cell division topological specificity factor (91 aa).

Belongs to the MinE family.

Prevents the cell division inhibition by proteins MinC and MinD at internal division sites while permitting inhibition at polar sites. This ensures cell division at the proper site by restricting the formation of a division septum at the midpoint of the long axis of the cell. This is Cell division topological specificity factor from Desulfitobacterium hafniense (strain DSM 10664 / DCB-2).